Consider the following 91-residue polypeptide: Large ribosomal subunit protein eL37 (91 aa).

Zn(2+) contacts are provided by Cys-19, Cys-22, Cys-34, and Cys-37. The segment at 19–37 adopts a C4-type zinc-finger fold; that stretch reads CRRCGKSSFHIQKKTCASC.

It belongs to the eukaryotic ribosomal protein eL37 family. Zn(2+) serves as cofactor.

Binds to the 23S rRNA. This Dictyostelium discoideum (Social amoeba) protein is Large ribosomal subunit protein eL37 (rpl37).